Here is a 91-residue protein sequence, read N- to C-terminus: Uteroglobin (91 aa).

A signal peptide spans 1 to 21; that stretch reads MKLAVTLTLVTLALCCSSASA.

This sequence belongs to the secretoglobin family. Antiparallel homodimer; disulfide-linked. Interaction with LMBR1L has been observed in PubMed:16423471, but not in PubMed:23964685. Club cells (nonciliated cells of the surface epithelium of the pulmonary airways).

It is found in the secreted. Functionally, binds phosphatidylcholine, phosphatidylinositol, polychlorinated biphenyls (PCB) and weakly progesterone, potent inhibitor of phospholipase A2. This is Uteroglobin (SCGB1A1) from Homo sapiens (Human).